Reading from the N-terminus, the 356-residue chain is tRNA-specific 2-thiouridylase MnmA (356 aa).

Residues 8-15 (GMSGGVDS) and M34 each bind ATP. C103 (nucleophile) is an active-site residue. An intrachain disulfide couples C103 to C199. ATP is bound at residue G127. The interval 149–151 (KDQ) is interaction with tRNA. C199 serves as the catalytic Cysteine persulfide intermediate. The segment at 305 to 306 (RY) is interaction with tRNA.

Belongs to the MnmA/TRMU family.

It is found in the cytoplasm. It carries out the reaction S-sulfanyl-L-cysteinyl-[protein] + uridine(34) in tRNA + AH2 + ATP = 2-thiouridine(34) in tRNA + L-cysteinyl-[protein] + A + AMP + diphosphate + H(+). Its function is as follows. Catalyzes the 2-thiolation of uridine at the wobble position (U34) of tRNA, leading to the formation of s(2)U34. In Clostridium kluyveri (strain ATCC 8527 / DSM 555 / NBRC 12016 / NCIMB 10680 / K1), this protein is tRNA-specific 2-thiouridylase MnmA.